Here is a 421-residue protein sequence, read N- to C-terminus: MKLFKNLTVQVITAVIIGVIVGLVWPDVGKEMKPLGDTFINAVKMVIAPIIFFTIVLGIAKMGDMKKVGKVGGKAFIYFEVVTTLALIIGLFVVNIMKPGAGLDYSKLEKGDVSQYTQNGGQGIDWIEFITHIVPSNMVDAFAKGDILQVLFFSILFGVGLAALGEKGKSVIDFFDKVSHVFFKIIGYIMRAAPIGAFGAMAYTIGHFGLDSIKPLASLMMSVYITMFLFVFVALNIICKLYGFSLWNYLRFIKDELLIVLGTSSSESVLPRMMDKMERYGCSKSVVGLVIPTGYSFNLDGTSIYLSMATVFLAQVFGVDLSIGQQITIILVLMLTSKGAAGVTGSGFIVLASTLSALQVIPLEGLALLLGVDRFMSEGRAIVNLIGNGIATIIVAKSENEFDEAKSIEAVEGMKKMKTAV.

Transmembrane regions (helical) follow at residues 9–29, 39–59, 76–96, 145–165, 185–205, 219–239, 316–336, and 348–368; these read VQVITAVIIGVIVGLVWPDVG, FINAVKMVIAPIIFFTIVLGI, FIYFEVVTTLALIIGLFVVNI, GDILQVLFFSILFGVGLAALG, IIGYIMRAAPIGAFGAMAYTI, LMMSVYITMFLFVFVALNIIC, VFGVDLSIGQQITIILVLMLT, and FIVLASTLSALQVIPLEGLAL.

It belongs to the dicarboxylate/amino acid:cation symporter (DAACS) (TC 2.A.23) family.

It localises to the cell membrane. Its function is as follows. Responsible for the transport of succinate and fumarate, but not malate, across the membrane. The sequence is that of C4-dicarboxylate transport protein (dctA) from Bacillus subtilis (strain 168).